Reading from the N-terminus, the 245-residue chain is Small ribosomal subunit protein uS2 (245 aa).

A disordered region spans residues 226–245; sequence GGGANVGEMENPPVEATADA.

Belongs to the universal ribosomal protein uS2 family.

In Erythrobacter litoralis (strain HTCC2594), this protein is Small ribosomal subunit protein uS2.